Here is a 277-residue protein sequence, read N- to C-terminus: Pantothenate synthetase (277 aa).

Met26 to His33 contributes to the ATP binding site. The active-site Proton donor is the His33. Gln57 contacts (R)-pantoate. Gln57 is a beta-alanine binding site. Gly143–Asp146 contacts ATP. Residue Gln149 coordinates (R)-pantoate. Residues Val172 and Leu180–Arg183 each bind ATP.

This sequence belongs to the pantothenate synthetase family. Homodimer.

It localises to the cytoplasm. It carries out the reaction (R)-pantoate + beta-alanine + ATP = (R)-pantothenate + AMP + diphosphate + H(+). The protein operates within cofactor biosynthesis; (R)-pantothenate biosynthesis; (R)-pantothenate from (R)-pantoate and beta-alanine: step 1/1. Functionally, catalyzes the condensation of pantoate with beta-alanine in an ATP-dependent reaction via a pantoyl-adenylate intermediate. The sequence is that of Pantothenate synthetase from Nitrosomonas europaea (strain ATCC 19718 / CIP 103999 / KCTC 2705 / NBRC 14298).